A 229-amino-acid polypeptide reads, in one-letter code: ATP synthase subunit a (229 aa).

A run of 7 helical transmembrane segments spans residues 25–45 (VHIIYTWVVMALLITLGVLGA), 58–75 (FLEVLISGIEEFMVSVTG), 81–101 (FFPLAGTIAIFIAVSNLIGLV), 110–130 (SINTPLACAIVVFVFTHFIGI), 141–161 (FLGPVWWLAPLIFPIEIIGHL), 175–195 (MMGHESVLVILFMLGGAFFAP), and 196–216 (LPIMALGIFVAFVQAFVFFLL).

Belongs to the ATPase A chain family. In terms of assembly, F-type ATPases have 2 components, CF(1) - the catalytic core - and CF(0) - the membrane proton channel. CF(1) has five subunits: alpha(3), beta(3), gamma(1), delta(1), epsilon(1). CF(0) has three main subunits: a(1), b(2) and c(9-12). The alpha and beta chains form an alternating ring which encloses part of the gamma chain. CF(1) is attached to CF(0) by a central stalk formed by the gamma and epsilon chains, while a peripheral stalk is formed by the delta and b chains.

The protein localises to the cell inner membrane. Its function is as follows. Key component of the proton channel; it plays a direct role in the translocation of protons across the membrane. This chain is ATP synthase subunit a, found in Desulfosudis oleivorans (strain DSM 6200 / JCM 39069 / Hxd3) (Desulfococcus oleovorans).